The sequence spans 218 residues: Capsid protein (218 aa).

Met-1 is modified (N-acetylmethionine; by host). Low complexity predominate over residues 1-10 (MDKSESTSAG). Positions 1-30 (MDKSESTSAGRNRRRRPRRGSRSASSSADA) are disordered. A compositionally biased stretch (basic residues) spans 11-21 (RNRRRRPRRGS).

It belongs to the cucumovirus capsid protein family.

It localises to the virion. Functionally, capsid protein. Probably binds RNA and plays a role in packaging. The chain is Capsid protein from Cucumis sativus (Cucumber).